The chain runs to 31 residues: Cytochrome b6-f complex subunit 8 (31 aa).

Residues 5–25 traverse the membrane as a helical segment; it reads IVSLAWAALMVVFTFSLSLVV.

Belongs to the PetN family. The 4 large subunits of the cytochrome b6-f complex are cytochrome b6, subunit IV (17 kDa polypeptide, PetD), cytochrome f and the Rieske protein, while the 4 small subunits are PetG, PetL, PetM and PetN. The complex functions as a dimer.

The protein resides in the plastid. It localises to the chloroplast thylakoid membrane. Its function is as follows. Component of the cytochrome b6-f complex, which mediates electron transfer between photosystem II (PSII) and photosystem I (PSI), cyclic electron flow around PSI, and state transitions. The polypeptide is Cytochrome b6-f complex subunit 8 (Acorus calamus (Sweet flag)).